Reading from the N-terminus, the 178-residue chain is Ribosome maturation factor RimM (178 aa).

The PRC barrel domain maps to 103-177; it reads SKDEYYFFEI…KIVVKVPEWL (75 aa).

Belongs to the RimM family. As to quaternary structure, binds ribosomal protein uS19.

Its subcellular location is the cytoplasm. In terms of biological role, an accessory protein needed during the final step in the assembly of 30S ribosomal subunit, possibly for assembly of the head region. Essential for efficient processing of 16S rRNA. May be needed both before and after RbfA during the maturation of 16S rRNA. It has affinity for free ribosomal 30S subunits but not for 70S ribosomes. The polypeptide is Ribosome maturation factor RimM (Thermosipho africanus (strain TCF52B)).